The primary structure comprises 209 residues: Large ribosomal subunit protein uL4 (209 aa).

Residues 46–72 (GTSSTKTRSEVRGSSKKPWKQKGTGRA) form a disordered region. Residues 59 to 72 (SSKKPWKQKGTGRA) show a composition bias toward basic residues.

The protein belongs to the universal ribosomal protein uL4 family. Part of the 50S ribosomal subunit.

In terms of biological role, one of the primary rRNA binding proteins, this protein initially binds near the 5'-end of the 23S rRNA. It is important during the early stages of 50S assembly. It makes multiple contacts with different domains of the 23S rRNA in the assembled 50S subunit and ribosome. Its function is as follows. Forms part of the polypeptide exit tunnel. In Borreliella burgdorferi (strain ATCC 35210 / DSM 4680 / CIP 102532 / B31) (Borrelia burgdorferi), this protein is Large ribosomal subunit protein uL4.